The sequence spans 351 residues: Protein arginine N-methyltransferase 1-B (351 aa).

In terms of domain architecture, SAM-dependent MTase PRMT-type spans 30-331 (KDYYFDSYAH…KNNRDLDFTV (302 aa)). S-adenosyl-L-methionine-binding residues include H43, R52, G76, E98, and E127. Residues E142 and E151 contribute to the active site.

Belongs to the class I-like SAM-binding methyltransferase superfamily. Protein arginine N-methyltransferase family. In terms of assembly, homodimer. Homooctamer; individual homodimers associates to form a homooctamer and homooligomerization is required for proper localization to the cell membrane. Individual homodimers can associate to form a homohexamer. Component of a complex with lsm14a/rap55a. Interacts with cirbp. In terms of tissue distribution, from the onset of gastrulation, expressed in dorsal mesoderm, and in dorsal and ventral ectoderm. At the neurula and tail bud stages, expression is restricted to the neuroectoderm, with highest expression in the anterior neural plate.

The protein resides in the nucleus. It is found in the nucleoplasm. Its subcellular location is the cytoplasm. The protein localises to the cytosol. It catalyses the reaction L-arginyl-[protein] + 2 S-adenosyl-L-methionine = N(omega),N(omega)-dimethyl-L-arginyl-[protein] + 2 S-adenosyl-L-homocysteine + 2 H(+). The catalysed reaction is L-arginyl-[protein] + S-adenosyl-L-methionine = N(omega)-methyl-L-arginyl-[protein] + S-adenosyl-L-homocysteine + H(+). The enzyme catalyses N(omega)-methyl-L-arginyl-[protein] + S-adenosyl-L-methionine = N(omega),N(omega)-dimethyl-L-arginyl-[protein] + S-adenosyl-L-homocysteine + H(+). Its function is as follows. Arginine methyltransferase that methylates (mono and asymmetric dimethylation) the guanidino nitrogens of arginyl residues present in target proteins. Constitutes the main enzyme that mediates monomethylation and asymmetric dimethylation of histone H4 'Arg-4' (H4R3me1 and H4R3me2a, respectively), a specific tag for epigenetic transcriptional activation. Methylates ilf3 to regulate its DNA-binding activity. Required for neural induction, playing a key role in the control of epidermal versus neural cell fate choice. This Xenopus laevis (African clawed frog) protein is Protein arginine N-methyltransferase 1-B (prmt1-b).